Reading from the N-terminus, the 408-residue chain is Zinc finger protein 764 (408 aa).

Positions 26–97 constitute a KRAB domain; it reads VSFADVAVYF…AAQDPEVAKC (72 aa). The segment at 91-167 is disordered; that stretch reads DPEVAKCQTQ…GRPSLCAHPP (77 aa). 7 consecutive C2H2-type zinc fingers follow at residues 175–197, 203–225, 231–253, 259–281, 287–309, 315–337, and 343–365; these read HGCY…VYSH, FHCT…RAIH, HRCL…LRVH, YGCA…RRVH, FPCP…VRTH, YPCP…RRTH, and YPCP…QWVH.

The protein belongs to the krueppel C2H2-type zinc-finger protein family. In terms of assembly, interacts (via KRAB domain) with NR3C1/GR (via NR LBD domain); the interaction regulates transcription factor activity of NR3C1 by directing its actions toward certain biologic pathways.

It localises to the nucleus. Functionally, zinc finger protein that functions as a cofactor for steroid hormone receptors, such as NR3C1/GR. Directs NR3C1/GR transcriptional activity toward specific biologic pathways by changing NR3C1/GR binding and transcriptional activity on the glucocorticoid-responsive genes. This Homo sapiens (Human) protein is Zinc finger protein 764.